The chain runs to 414 residues: Ornithine aminotransferase (414 aa).

A disulfide bridge connects residues Cys-154 and Cys-163. Lys-262 carries the N6-(pyridoxal phosphate)lysine modification.

This sequence belongs to the class-III pyridoxal-phosphate-dependent aminotransferase family. Homodimer. Pyridoxal 5'-phosphate is required as a cofactor. In terms of processing, the disulfide bond between Cys-154 and Cys-163 is reduced by TRX1 which increases OAT catalytic activity.

It localises to the cytoplasm. It carries out the reaction a 2-oxocarboxylate + L-ornithine = L-glutamate 5-semialdehyde + an L-alpha-amino acid. It catalyses the reaction L-ornithine + 2-oxoglutarate = L-glutamate 5-semialdehyde + L-glutamate. It functions in the pathway amino-acid biosynthesis; L-proline biosynthesis; L-glutamate 5-semialdehyde from L-ornithine: step 1/1. Unlike for mammalian OATs, activity is increased by TRX1-mediated reduction of the disulfide bond between Cys-154 and Cys-163. Binding to TRX1 may also induce conformational changes that facilitate substrate binding. Catalyzes the transamination of alpha-ketoglutarate with ornithine or N-acetylornithine and of glutamate-5-semialdehyde with glutamate and alanine. The sequence is that of Ornithine aminotransferase from Plasmodium chabaudi chabaudi.